Consider the following 244-residue polypeptide: L-xylulose reductase (244 aa).

An N-acetylmethionine modification is found at Met-1. An NADP(+)-binding site is contributed by 11–40 (LVTGAGKGIGRGTVQALHATGARVVAVSRT). Arg-21 carries the post-translational modification Omega-N-methylarginine. At Ser-46 the chain carries Phosphoserine. Ser-136 contributes to the substrate binding site. Tyr-149 serves as the catalytic Proton acceptor. Lys-153 contacts NADP(+).

It belongs to the short-chain dehydrogenases/reductases (SDR) family. In terms of assembly, homotetramer. Highly expressed in kidney, liver and epididymis. In the epididymis, it is mainly expressed in the proximal and distal sections of the corpus region. Weakly or not expressed in brain, lung, heart, spleen and testis.

The protein resides in the membrane. The catalysed reaction is xylitol + NADP(+) = L-xylulose + NADPH + H(+). Catalyzes the NADPH-dependent reduction of several pentoses, tetroses, trioses, alpha-dicarbonyl compounds and L-xylulose. Participates in the uronate cycle of glucose metabolism. May play a role in the water absorption and cellular osmoregulation in the proximal renal tubules by producing xylitol, an osmolyte, thereby preventing osmolytic stress from occurring in the renal tubules. The polypeptide is L-xylulose reductase (DCXR) (Homo sapiens (Human)).